The sequence spans 335 residues: Ornithine carbamoyltransferase (335 aa).

Carbamoyl phosphate contacts are provided by residues 56–59 (STRT), Q83, R107, and 134–137 (HPTQ). Residues N168, D232, and 236-237 (SM) each bind L-ornithine. Carbamoyl phosphate contacts are provided by residues 274-275 (CL) and R320.

This sequence belongs to the aspartate/ornithine carbamoyltransferase superfamily. OTCase family.

It is found in the cytoplasm. It carries out the reaction carbamoyl phosphate + L-ornithine = L-citrulline + phosphate + H(+). The protein operates within amino-acid biosynthesis; L-arginine biosynthesis; L-arginine from L-ornithine and carbamoyl phosphate: step 1/3. Functionally, reversibly catalyzes the transfer of the carbamoyl group from carbamoyl phosphate (CP) to the N(epsilon) atom of ornithine (ORN) to produce L-citrulline. This chain is Ornithine carbamoyltransferase, found in Yersinia pestis bv. Antiqua (strain Nepal516).